Reading from the N-terminus, the 490-residue chain is MTERVDPKKLIKGGLHDWEVVIGMEIHAQVTSRSKLFSGASTAFGGEPNDHVSLVDAAMPGMLPVINEECIAQAVRTGLGLKAQINLRSVFDRKNYFYPDLPQGYQISQYKDPIVGEGEVLVDLPDGESITVGIERLHLEQDAGKSLHDQDPTKSFVDLNRSGVALMEIVSRPDLRSSEEAKAYVTKLRTILRYLGTCDGDMEKGSLRADVNVSVRRPGEPLGTRCEIKNVNSIRFIGQAIETEARRQIAILEDGGKIDQETRLFDPGKGETRSMRSKEEAHDYRYFPDPDLLPLEFDQAYVDGLASGLPELPDAKKARFIKDFGLSAYDAGVLVAERASADYFEAVARGRDGKAAANWVINELFGRLNKEGRSIEDTPVSAEQLGTIVDLIGEGVISGKIAKDLFEIVWSEGGDPRAIVESRGMKQVTDTGAIEAAVDAIIAANPDKVEQAKAKPTLLGWFVGQTMKATGGKANPAAVNALLKDKLGIE.

This sequence belongs to the GatB/GatE family. GatB subfamily. Heterotrimer of A, B and C subunits.

It catalyses the reaction L-glutamyl-tRNA(Gln) + L-glutamine + ATP + H2O = L-glutaminyl-tRNA(Gln) + L-glutamate + ADP + phosphate + H(+). The catalysed reaction is L-aspartyl-tRNA(Asn) + L-glutamine + ATP + H2O = L-asparaginyl-tRNA(Asn) + L-glutamate + ADP + phosphate + 2 H(+). In terms of biological role, allows the formation of correctly charged Asn-tRNA(Asn) or Gln-tRNA(Gln) through the transamidation of misacylated Asp-tRNA(Asn) or Glu-tRNA(Gln) in organisms which lack either or both of asparaginyl-tRNA or glutaminyl-tRNA synthetases. The reaction takes place in the presence of glutamine and ATP through an activated phospho-Asp-tRNA(Asn) or phospho-Glu-tRNA(Gln). The protein is Aspartyl/glutamyl-tRNA(Asn/Gln) amidotransferase subunit B of Methylorubrum populi (strain ATCC BAA-705 / NCIMB 13946 / BJ001) (Methylobacterium populi).